The following is a 457-amino-acid chain: Bifunctional protein GlmU (457 aa).

Positions 1-229 are pyrophosphorylase; that stretch reads MYNCAIILAA…YEEIMGVNSR (229 aa). UDP-N-acetyl-alpha-D-glucosamine is bound by residues 8–11, K22, Q73, and 78–79; these read LAAG and GT. D103 serves as a coordination point for Mg(2+). UDP-N-acetyl-alpha-D-glucosamine contacts are provided by G140, E155, N170, and N227. N227 is a Mg(2+) binding site. Positions 230–250 are linker; sequence VQLSEAEIVMRKRINHKHMVN. An N-acetyltransferase region spans residues 251-457; it reads GVTFIDCEST…WLDKKGLLKK (207 aa). Residues R332 and K350 each contribute to the UDP-N-acetyl-alpha-D-glucosamine site. H362 (proton acceptor) is an active-site residue. Residues Y365 and N376 each coordinate UDP-N-acetyl-alpha-D-glucosamine. Acetyl-CoA-binding positions include 385–386, A422, and R439; that span reads NY.

This sequence in the N-terminal section; belongs to the N-acetylglucosamine-1-phosphate uridyltransferase family. In the C-terminal section; belongs to the transferase hexapeptide repeat family. Homotrimer. The cofactor is Mg(2+).

It localises to the cytoplasm. The catalysed reaction is alpha-D-glucosamine 1-phosphate + acetyl-CoA = N-acetyl-alpha-D-glucosamine 1-phosphate + CoA + H(+). It carries out the reaction N-acetyl-alpha-D-glucosamine 1-phosphate + UTP + H(+) = UDP-N-acetyl-alpha-D-glucosamine + diphosphate. It participates in nucleotide-sugar biosynthesis; UDP-N-acetyl-alpha-D-glucosamine biosynthesis; N-acetyl-alpha-D-glucosamine 1-phosphate from alpha-D-glucosamine 6-phosphate (route II): step 2/2. Its pathway is nucleotide-sugar biosynthesis; UDP-N-acetyl-alpha-D-glucosamine biosynthesis; UDP-N-acetyl-alpha-D-glucosamine from N-acetyl-alpha-D-glucosamine 1-phosphate: step 1/1. The protein operates within bacterial outer membrane biogenesis; LPS lipid A biosynthesis. Functionally, catalyzes the last two sequential reactions in the de novo biosynthetic pathway for UDP-N-acetylglucosamine (UDP-GlcNAc). The C-terminal domain catalyzes the transfer of acetyl group from acetyl coenzyme A to glucosamine-1-phosphate (GlcN-1-P) to produce N-acetylglucosamine-1-phosphate (GlcNAc-1-P), which is converted into UDP-GlcNAc by the transfer of uridine 5-monophosphate (from uridine 5-triphosphate), a reaction catalyzed by the N-terminal domain. This Clostridium botulinum (strain ATCC 19397 / Type A) protein is Bifunctional protein GlmU.